The primary structure comprises 118 residues: Immunoglobulin lambda variable 2-8 (118 aa).

Positions 1–19 (MAWALLLLTLLTQGTGSWA) are cleaved as a signal peptide. Position 20 is a pyrrolidone carboxylic acid (Gln-20). The framework-1 stretch occupies residues 20–44 (QSALTQPPSASGSPGQSVTISCTGT). The 99-residue stretch at 20-118 (QSALTQPPSA…CSSYAGSNNF (99 aa)) folds into the Ig-like domain. Cys-41 and Cys-109 are oxidised to a cystine. Residues 45 to 53 (SSDVGGYNY) are complementarity-determining-1. The tract at residues 54–70 (VSWYQQHPGKAPKLMIY) is framework-2. The tract at residues 71–73 (EVS) is complementarity-determining-2. Residues 74 to 109 (KRPSGVPDRFSGSKSGNTASLTVSGLQAEDEADYYC) form a framework-3 region. Residues 76 to 97 (PSGVPDRFSGSKSGNTASLTVS) are disordered. Residues 85–97 (GSKSGNTASLTVS) show a composition bias toward polar residues. The complementarity-determining-3 stretch occupies residues 110–118 (SSYAGSNNF).

As to quaternary structure, immunoglobulins are composed of two identical heavy chains and two identical light chains; disulfide-linked.

It is found in the secreted. The protein resides in the cell membrane. V region of the variable domain of immunoglobulin light chains that participates in the antigen recognition. Immunoglobulins, also known as antibodies, are membrane-bound or secreted glycoproteins produced by B lymphocytes. In the recognition phase of humoral immunity, the membrane-bound immunoglobulins serve as receptors which, upon binding of a specific antigen, trigger the clonal expansion and differentiation of B lymphocytes into immunoglobulins-secreting plasma cells. Secreted immunoglobulins mediate the effector phase of humoral immunity, which results in the elimination of bound antigens. The antigen binding site is formed by the variable domain of one heavy chain, together with that of its associated light chain. Thus, each immunoglobulin has two antigen binding sites with remarkable affinity for a particular antigen. The variable domains are assembled by a process called V-(D)-J rearrangement and can then be subjected to somatic hypermutations which, after exposure to antigen and selection, allow affinity maturation for a particular antigen. The polypeptide is Immunoglobulin lambda variable 2-8 (Homo sapiens (Human)).